A 164-amino-acid chain; its full sequence is FMN reductase (NADH) RutF (164 aa).

The protein belongs to the non-flavoprotein flavin reductase family. RutF subfamily.

It carries out the reaction FMNH2 + NAD(+) = FMN + NADH + 2 H(+). Catalyzes the reduction of FMN to FMNH2 which is used to reduce pyrimidine by RutA via the Rut pathway. The polypeptide is FMN reductase (NADH) RutF (Escherichia coli O81 (strain ED1a)).